The chain runs to 39 residues: MERFIKRLSASCESTIHHKVYQIMNEAKTEFEKVLKKLK.

This chain is SPbeta prophage-derived uncharacterized protein YorT (yorT), found in Bacillus subtilis (strain 168).